We begin with the raw amino-acid sequence, 510 residues long: Bifunctional purine biosynthesis protein PurH (510 aa).

Residues Met-1–Val-143 enclose the MGS-like domain.

This sequence belongs to the PurH family.

It catalyses the reaction (6R)-10-formyltetrahydrofolate + 5-amino-1-(5-phospho-beta-D-ribosyl)imidazole-4-carboxamide = 5-formamido-1-(5-phospho-D-ribosyl)imidazole-4-carboxamide + (6S)-5,6,7,8-tetrahydrofolate. It carries out the reaction IMP + H2O = 5-formamido-1-(5-phospho-D-ribosyl)imidazole-4-carboxamide. It participates in purine metabolism; IMP biosynthesis via de novo pathway; 5-formamido-1-(5-phospho-D-ribosyl)imidazole-4-carboxamide from 5-amino-1-(5-phospho-D-ribosyl)imidazole-4-carboxamide (10-formyl THF route): step 1/1. It functions in the pathway purine metabolism; IMP biosynthesis via de novo pathway; IMP from 5-formamido-1-(5-phospho-D-ribosyl)imidazole-4-carboxamide: step 1/1. This Deinococcus deserti (strain DSM 17065 / CIP 109153 / LMG 22923 / VCD115) protein is Bifunctional purine biosynthesis protein PurH.